The sequence spans 303 residues: tRNA dimethylallyltransferase (303 aa).

Residue 13–20 (GPTASGKS) coordinates ATP. 15-20 (TASGKS) provides a ligand contact to substrate. Interaction with substrate tRNA regions lie at residues 38-41 (DSMQ) and 162-166 (QRLLR).

The protein belongs to the IPP transferase family. In terms of assembly, monomer. It depends on Mg(2+) as a cofactor.

It carries out the reaction adenosine(37) in tRNA + dimethylallyl diphosphate = N(6)-dimethylallyladenosine(37) in tRNA + diphosphate. Its function is as follows. Catalyzes the transfer of a dimethylallyl group onto the adenine at position 37 in tRNAs that read codons beginning with uridine, leading to the formation of N6-(dimethylallyl)adenosine (i(6)A). The protein is tRNA dimethylallyltransferase of Methylocella silvestris (strain DSM 15510 / CIP 108128 / LMG 27833 / NCIMB 13906 / BL2).